The chain runs to 69 residues: Conotoxin AbVIE (69 aa).

An N-terminal signal peptide occupies residues 1–17; the sequence is VLIIAVLFLTACQLTTA. A propeptide spanning residues 18–40 is cleaved from the precursor; the sequence is ETSSRGKQKHRALRSTDKYSRMT. 3 disulfide bridges follow: Cys-43-Cys-57, Cys-50-Cys-61, and Cys-56-Cys-66.

Belongs to the conotoxin O1 superfamily. Expressed by the venom duct.

It localises to the secreted. The polypeptide is Conotoxin AbVIE (Conus abbreviatus (Abbreviated cone)).